The primary structure comprises 239 residues: IkB-like protein (239 aa).

ANK repeat units follow at residues N48–E77, D87–I116, N124–R153, and K158–F187. The Nuclear localization signal signature appears at H81–D87. Residues K203–E214 carry the Nuclear localization signal motif. A PxIxITxC motif; Interaction with host PPP3CA motif is present at residues P206–C213. Residues F228–V231 carry the FLCV motif motif.

The protein belongs to the asfivirus A238L family. As to quaternary structure, interacts with host PPIA. Interacts with host PPP3CA/Calcineurin. Interacts with host RELA/p65; interaction of the 32 kDa form with host RELA results in the formation of a stable complex with NF-kappa-B. Interacts with host PPP3R1. Interacts with host EP300; this interaction inhibits the association of host EP300 with host RELA, JUN and NFATC2. Post-translationally, the protein exists in a 28 kDa and a 32 kDa form, probably due to post-translational modifications which are neither phosphorylation, nor sumoylation.

The protein resides in the host nucleus. Its subcellular location is the host cytoplasm. IkB-like protein that inhibits the binding of NF-kappa-B to DNA, thereby downregulating pro-inflammatory cytokine production. Forms a heterodimer with the NF-kappa-B subunit RELA/p65 and prevents the activation of the NF-kappa-B transcription factor. Inhibits calcineurin function, which is required for the induction of nuclear factor of activated T cells (NFAT)-dependent immune response genes. Prevents the binding of substrates to calcineurin without affecting the phosphatase activity. Does not contain the serine residues that are phosphorylated by host IkB kinase and thus is not degraded following stimulation of the NFkB pathway. This is IkB-like protein (A238L) from Ornithodoros (relapsing fever ticks).